Reading from the N-terminus, the 1025-residue chain is Presequence protease, mitochondrial (1025 aa).

H90 serves as a coordination point for Zn(2+). E93 acts as the Proton acceptor in catalysis. H94 lines the Zn(2+) pocket. Residue E166 is part of the active site. Residue E197 coordinates Zn(2+).

The protein belongs to the peptidase M16 family. PreP subfamily. Monomer and homodimer; homodimerization is induced by binding of the substrate. Requires Zn(2+) as cofactor.

It localises to the mitochondrion intermembrane space. Its subcellular location is the mitochondrion matrix. Functionally, degrades mitochondrial transit peptides after their cleavage in the intermembrane space or in the matrix, and presequence peptides; clearance of these peptides is required to keep the presequence processing machinery running. Preferentially cleaves the N-terminal side of paired basic amino acid residues. Also degrades other unstructured peptides. May function as an ATP-dependent peptidase as opposed to a metalloendopeptidase. The polypeptide is Presequence protease, mitochondrial (cym1) (Aspergillus oryzae (strain ATCC 42149 / RIB 40) (Yellow koji mold)).